An 873-amino-acid polypeptide reads, in one-letter code: Cilia- and flagella-associated protein 58 (873 aa).

Coiled coils occupy residues 106-609 (VDSA…VISE) and 642-832 (ETQY…QKRK). Positions 202 to 221 (QEIQHRQNEASRESRKKEKL) are disordered. Positions 204-221 (IQHRQNEASRESRKKEKL) are enriched in basic and acidic residues.

This sequence belongs to the CFAP58 family. Interacts with ODFP2. As to expression, predominantly expressed in the testis. Also found at lower levels in ciliated cells and tissues such as neural progenitor cells and oviducts.

The protein resides in the cell projection. Its subcellular location is the cilium. The protein localises to the flagellum. It is found in the cytoplasm. It localises to the cytoskeleton. The protein resides in the microtubule organizing center. Its subcellular location is the centrosome. Has an essential role in the assembly and organization of the sperm flagellar axoneme. Required for the elongation of the primary cilium and sperm flagellar midpiece via modulation of the Notch signaling pathway. The chain is Cilia- and flagella-associated protein 58 from Mus musculus (Mouse).